Consider the following 299-residue polypeptide: Transcription factor MYB17 (299 aa).

HTH myb-type domains are found at residues 9–61 (KIGL…TNYL) and 62–116 (RPDI…KKRL). DNA-binding regions (H-T-H motif) lie at residues 37–61 (WRTLPKLAGLLRCGKSCRLRWTNYL) and 89–112 (WAAIAAQLPGRTDNEIKNLWNTHL).

Interacts with LFY. In terms of tissue distribution, expressed in the shoot apex, young flower buds, developing carpels and siliques. Expressed in floral meristem, initiating floral primordia and developing flowers.

The protein resides in the nucleus. Its function is as follows. Transcription factor that may play a role in flower development by repressing ANT. Regulates the transition of meristem identity from vegetative growth to flowering. Acts downstream of LFY and upstream of AP1. Directly activates AP1 to promote floral fate. Together with LFY and AP1 may constitute a regulatory network that contributes to an abrupt and robust meristem identity transition. The sequence is that of Transcription factor MYB17 from Arabidopsis thaliana (Mouse-ear cress).